Here is a 179-residue protein sequence, read N- to C-terminus: ATP synthase subunit delta (179 aa).

It belongs to the ATPase delta chain family. F-type ATPases have 2 components, F(1) - the catalytic core - and F(0) - the membrane proton channel. F(1) has five subunits: alpha(3), beta(3), gamma(1), delta(1), epsilon(1). F(0) has three main subunits: a(1), b(2) and c(10-14). The alpha and beta chains form an alternating ring which encloses part of the gamma chain. F(1) is attached to F(0) by a central stalk formed by the gamma and epsilon chains, while a peripheral stalk is formed by the delta and b chains.

It is found in the cell inner membrane. In terms of biological role, f(1)F(0) ATP synthase produces ATP from ADP in the presence of a proton or sodium gradient. F-type ATPases consist of two structural domains, F(1) containing the extramembraneous catalytic core and F(0) containing the membrane proton channel, linked together by a central stalk and a peripheral stalk. During catalysis, ATP synthesis in the catalytic domain of F(1) is coupled via a rotary mechanism of the central stalk subunits to proton translocation. Functionally, this protein is part of the stalk that links CF(0) to CF(1). It either transmits conformational changes from CF(0) to CF(1) or is implicated in proton conduction. In Anaeromyxobacter dehalogenans (strain 2CP-1 / ATCC BAA-258), this protein is ATP synthase subunit delta.